The sequence spans 376 residues: uncharacterized protein (376 aa).

2 helical membrane passes run 153-173 (QGTLIKFQQILVCLAIIVLFA) and 188-208 (HRPFLIDFFTINAIFTVLAVY).

Its subcellular location is the membrane. This is an uncharacterized protein from Saccharomyces cerevisiae (strain ATCC 204508 / S288c) (Baker's yeast).